Reading from the N-terminus, the 155-residue chain is uncharacterized protein (155 aa).

2 disordered regions span residues 1-22 (MSSQ…TFTF) and 110-155 (NKEP…DTQA). Ser-2 carries the post-translational modification N-acetylserine. 3 positions are modified to phosphoserine: Ser-136, Ser-144, and Ser-146. Residues 136–155 (SDEDLDAESDSDGEDGDTQA) show a composition bias toward acidic residues.

This is an uncharacterized protein from Mus musculus (Mouse).